A 173-amino-acid chain; its full sequence is MPRSMKNDNFIDKTFTVMADLILKLLPGVSSEQKKAFAYYRDGMAAQSEGEYAEALENYREALALEQGEEDRSYILYNMGLIYQSNGELDKALEYYHQALELNPRLCSALNNIAVLLHHKGELSLQAGDEETAEALFNEAAQYWIRAIRIAPNNYIEAQNWLKTTGRANLEVY.

3 TPR repeats span residues 36–69 (AFAYYRDGMAAQSEGEYAEALENYREALALEQGE), 73–106 (SYILYNMGLIYQSNGELDKALEYYHQALELNPRL), and 121–154 (GELSLQAGDEETAEALFNEAAQYWIRAIRIAPNN).

Belongs to the Ycf3 family.

Its subcellular location is the cellular thylakoid membrane. Essential for the assembly of the photosystem I (PSI) complex. May act as a chaperone-like factor to guide the assembly of the PSI subunits. The chain is Photosystem I assembly protein Ycf3 from Synechococcus sp. (strain JA-2-3B'a(2-13)) (Cyanobacteria bacterium Yellowstone B-Prime).